Consider the following 501-residue polypeptide: Maturase K (501 aa).

Belongs to the intron maturase 2 family. MatK subfamily.

It is found in the plastid. Its subcellular location is the chloroplast. Its function is as follows. Usually encoded in the trnK tRNA gene intron. Probably assists in splicing its own and other chloroplast group II introns. The polypeptide is Maturase K (Amborella trichopoda).